We begin with the raw amino-acid sequence, 170 residues long: Myosin regulatory light chain 1 (170 aa).

Basic residues predominate over residues 1-13 (MSKAAKKKSSKKR). Residues 1–22 (MSKAAKKKSSKKRSGSEAAQFD) form a disordered region. EF-hand domains follow at residues 24–59 (KTIQ…MGQI) and 93–128 (DPEA…KRGE). Asp-37, Asn-39, Asp-41, and Asp-48 together coordinate Ca(2+).

In terms of assembly, myosin is a hexamer of 2 heavy chains and 4 light chains (two regulatory light chains and two essential light chains).

This is Myosin regulatory light chain 1 (mlc-1) from Caenorhabditis elegans.